A 123-amino-acid chain; its full sequence is Glutaredoxin-like protein (123 aa).

In terms of domain architecture, Glutaredoxin spans 27 to 123 (INEVEESITN…GTLFNDLKKK (97 aa)).

Belongs to the glutaredoxin family.

This is Glutaredoxin-like protein (grxB) from Dictyostelium discoideum (Social amoeba).